A 270-amino-acid chain; its full sequence is Sulfur carrier protein FdhD (270 aa).

The active-site Cysteine persulfide intermediate is the cysteine 116. Residue 253 to 258 (FAREGK) participates in Mo-bis(molybdopterin guanine dinucleotide) binding.

It belongs to the FdhD family.

It is found in the cytoplasm. Functionally, required for formate dehydrogenase (FDH) activity. Acts as a sulfur carrier protein that transfers sulfur from IscS to the molybdenum cofactor prior to its insertion into FDH. In Haemophilus influenzae (strain ATCC 51907 / DSM 11121 / KW20 / Rd), this protein is Sulfur carrier protein FdhD.